Consider the following 169-residue polypeptide: Phosphopantetheine adenylyltransferase (169 aa).

Position 13 (threonine 13) interacts with substrate. Residues threonine 13–phenylalanine 14 and histidine 21 each bind ATP. Substrate-binding residues include lysine 45, leucine 82, and arginine 96. ATP is bound by residues glycine 97–arginine 99, glutamate 107, and histidine 132–arginine 138.

The protein belongs to the bacterial CoaD family. Homohexamer. Requires Mg(2+) as cofactor.

The protein localises to the cytoplasm. It carries out the reaction (R)-4'-phosphopantetheine + ATP + H(+) = 3'-dephospho-CoA + diphosphate. It functions in the pathway cofactor biosynthesis; coenzyme A biosynthesis; CoA from (R)-pantothenate: step 4/5. In terms of biological role, reversibly transfers an adenylyl group from ATP to 4'-phosphopantetheine, yielding dephospho-CoA (dPCoA) and pyrophosphate. The chain is Phosphopantetheine adenylyltransferase from Acidiphilium cryptum (strain JF-5).